A 282-amino-acid polypeptide reads, in one-letter code: Sulfur carrier protein FdhD (282 aa).

Cys115 acts as the Cysteine persulfide intermediate in catalysis.

Belongs to the FdhD family.

Its subcellular location is the cytoplasm. In terms of biological role, required for formate dehydrogenase (FDH) activity. Acts as a sulfur carrier protein that transfers sulfur from IscS to the molybdenum cofactor prior to its insertion into FDH. The chain is Sulfur carrier protein FdhD from Streptomyces avermitilis (strain ATCC 31267 / DSM 46492 / JCM 5070 / NBRC 14893 / NCIMB 12804 / NRRL 8165 / MA-4680).